We begin with the raw amino-acid sequence, 577 residues long: Sulfite reductase [NADPH] hemoprotein beta-component (577 aa).

[4Fe-4S] cluster is bound by residues Cys-436, Cys-442, Cys-481, and Cys-485. Cys-485 lines the siroheme pocket.

This sequence belongs to the nitrite and sulfite reductase 4Fe-4S domain family. Alpha(8)-beta(8). The alpha component is a flavoprotein, the beta component is a hemoprotein. The cofactor is siroheme. [4Fe-4S] cluster serves as cofactor.

It carries out the reaction hydrogen sulfide + 3 NADP(+) + 3 H2O = sulfite + 3 NADPH + 4 H(+). Its pathway is sulfur metabolism; hydrogen sulfide biosynthesis; hydrogen sulfide from sulfite (NADPH route): step 1/1. Functionally, component of the sulfite reductase complex that catalyzes the 6-electron reduction of sulfite to sulfide. This is one of several activities required for the biosynthesis of L-cysteine from sulfate. The protein is Sulfite reductase [NADPH] hemoprotein beta-component of Shewanella woodyi (strain ATCC 51908 / MS32).